The primary structure comprises 368 residues: Glycolate oxidase 2 (368 aa).

The region spanning Met-1–Asp-360 is the FMN hydroxy acid dehydrogenase domain. FMN-binding positions include Pro-78 to Ala-80, Ser-107, Gln-128 to Ser-130, and Thr-156. Arg-165 contacts glyoxylate. Residues Lys-231 and Ser-253 each coordinate FMN. Residues His-255 and Arg-258 each coordinate glyoxylate. His-255 acts as the Proton acceptor in catalysis. Residues Asp-286–Arg-290 and Gly-309–Arg-310 contribute to the FMN site. Positions Ser-366–Leu-368 match the Microbody targeting signal motif.

This sequence belongs to the FMN-dependent alpha-hydroxy acid dehydrogenase family. In terms of assembly, homotetramer. Requires FMN as cofactor.

It is found in the peroxisome. It catalyses the reaction glycolate + O2 = glyoxylate + H2O2. It participates in photosynthesis; photorespiration; glycine from 2-phosphoglycolate: step 2/3. Functionally, catalyzes the oxidation of glycolate to glyoxylate, with a reduction of O2 to H2O2. Is a key enzyme in photorespiration in green plants. In Oryza sativa subsp. indica (Rice), this protein is Glycolate oxidase 2 (GLO2).